Here is a 98-residue protein sequence, read N- to C-terminus: NADH-ubiquinone oxidoreductase chain 4L (98 aa).

A run of 3 helical transmembrane segments spans residues 1-21, 28-48, and 59-79; these read MTSI…GVLV, STLL…ALLI, and APLI…ALLV.

Belongs to the complex I subunit 4L family. As to quaternary structure, core subunit of respiratory chain NADH dehydrogenase (Complex I) which is composed of 45 different subunits.

Its subcellular location is the mitochondrion inner membrane. It carries out the reaction a ubiquinone + NADH + 5 H(+)(in) = a ubiquinol + NAD(+) + 4 H(+)(out). In terms of biological role, core subunit of the mitochondrial membrane respiratory chain NADH dehydrogenase (Complex I) which catalyzes electron transfer from NADH through the respiratory chain, using ubiquinone as an electron acceptor. Part of the enzyme membrane arm which is embedded in the lipid bilayer and involved in proton translocation. The chain is NADH-ubiquinone oxidoreductase chain 4L (MT-ND4L) from Dactylopsila trivirgata (Striped possum).